We begin with the raw amino-acid sequence, 521 residues long: MFTGLHDILIILFLLVTLKIAQNVDHTKFLQKYGYLTSGDNQLSSESLSDALKNMQRMAGLEETGELDERTIQMMERPRCGHPDVEDHQKSRGKRYAPPQFKWKEKIITYGCKAVGTSTRISLDDLRRTMHQAASQWSELADVEIVESSVKNPMMVISAGRENHYPCTVRFDTKTLAHAFFPTNGQIHINDRVQFAMTNYTERMGANSLYSVVAHEMGHALGFSHSPDIDSVMFAYDTPRKWKFTSMDKYNMRSYYGAKASKKENEEEERKTENEDKRRKTEKDRGRTREHESDDIRPNECRVENPIVVQYRGEYLIFKSQWVWRVSSDWKRLIIKAVPINQLFPGLPNPIDAAVTVGHNLWVFVGEMIYVIYGNHMVHAPLRLSDIGINEKYVDLAYEWHYFNPPAVYIWKGSRYWKLDEKMYHRRVDERYPKDTDLNWARVPKGVHSAFTYEKEIHLLRGNQVFRMNSSRSVFDIADGYPQPLQSFFGFCPRNEKLVLNSSSSHFSLIYATITILILIF.

Positions 1-21 (MFTGLHDILIILFLLVTLKIA) are cleaved as a signal peptide. A propeptide spans 22-95 (QNVDHTKFLQ…EDHQKSRGKR (74 aa)) (activation peptide). The Cysteine switch motif lies at 78-85 (PRCGHPDV). Zn(2+) is bound at residue Cys-80. The Extracellular portion of the chain corresponds to 96–500 (YAPPQFKWKE…FCPRNEKLVL (405 aa)). Asn-199 carries an N-linked (GlcNAc...) asparagine glycan. His-215 is a binding site for Zn(2+). Residue Glu-216 is part of the active site. Zn(2+) contacts are provided by His-219 and His-225. Residues 259–298 (KASKKENEEEERKTENEDKRRKTEKDRGRTREHESDDIRP) form a disordered region. The segment covering 261–298 (SKKENEEEERKTENEDKRRKTEKDRGRTREHESDDIRP) has biased composition (basic and acidic residues). 3 Hemopexin repeats span residues 300-347 (ECRV…FPGL), 391-443 (EKYV…WARV), and 444-492 (PKGV…FGFC). Asn-469 is a glycosylation site (N-linked (GlcNAc...) asparagine). Residues 501 to 521 (NSSSSHFSLIYATITILILIF) traverse the membrane as a helical segment.

It belongs to the peptidase M10A family. It depends on Zn(2+) as a cofactor. As to expression, expressed in the anchor cell. Expressed in the anchor cell throughout the L3 and the early L4 stage, but not in vulva precursor cells P6.p, P6.px, or P6.pxx. Expression in P6.pxxx cells begins in late-L4 stage. During L4 lethargus, expressed in all four vulE cells, but not in vulF cells. The expression in vulE cells persists in adulthood. In males, expressed in the linker cell (LC) from the early L4 stage until LC death during the L4-to-adult molt.

It localises to the cell membrane. The protein resides in the basolateral cell membrane. In terms of biological role, metalloprotease which, together with cadherin cdh-3 and hemicentin him-4, plays a role in anchor cell (AC) invasion during postembryonic vulval development probably by promoting the degradation of the basement membrane separating the gonad from the vulva epithelium. The sequence is that of Matrix metalloproteinase-A from Caenorhabditis elegans.